Here is a 263-residue protein sequence, read N- to C-terminus: Taurine import ATP-binding protein TauB (263 aa).

The ABC transporter domain maps to 4 to 235 (LTAEAISLSF…RYAAGETVRS (232 aa)). 40-47 (GPSGCGKS) lines the ATP pocket.

The protein belongs to the ABC transporter superfamily. Taurine importer (TC 3.A.1.17.1) family. In terms of assembly, the complex is composed of two ATP-binding proteins (TauB), two transmembrane proteins (TauC) and a solute-binding protein (TauA).

It localises to the cell inner membrane. The enzyme catalyses taurine(out) + ATP + H2O = taurine(in) + ADP + phosphate + H(+). Part of the ABC transporter complex TauABC involved in taurine import. Responsible for energy coupling to the transport system. The protein is Taurine import ATP-binding protein TauB of Pseudomonas aeruginosa (strain ATCC 15692 / DSM 22644 / CIP 104116 / JCM 14847 / LMG 12228 / 1C / PRS 101 / PAO1).